Reading from the N-terminus, the 174-residue chain is Crossover junction endodeoxyribonuclease RuvC (174 aa).

Active-site residues include D8, E68, and D140. 3 residues coordinate Mg(2+): D8, E68, and D140.

Belongs to the RuvC family. As to quaternary structure, homodimer which binds Holliday junction (HJ) DNA. The HJ becomes 2-fold symmetrical on binding to RuvC with unstacked arms; it has a different conformation from HJ DNA in complex with RuvA. In the full resolvosome a probable DNA-RuvA(4)-RuvB(12)-RuvC(2) complex forms which resolves the HJ. It depends on Mg(2+) as a cofactor.

It is found in the cytoplasm. It catalyses the reaction Endonucleolytic cleavage at a junction such as a reciprocal single-stranded crossover between two homologous DNA duplexes (Holliday junction).. Its function is as follows. The RuvA-RuvB-RuvC complex processes Holliday junction (HJ) DNA during genetic recombination and DNA repair. Endonuclease that resolves HJ intermediates. Cleaves cruciform DNA by making single-stranded nicks across the HJ at symmetrical positions within the homologous arms, yielding a 5'-phosphate and a 3'-hydroxyl group; requires a central core of homology in the junction. The consensus cleavage sequence is 5'-(A/T)TT(C/G)-3'. Cleavage occurs on the 3'-side of the TT dinucleotide at the point of strand exchange. HJ branch migration catalyzed by RuvA-RuvB allows RuvC to scan DNA until it finds its consensus sequence, where it cleaves and resolves the cruciform DNA. In Legionella pneumophila (strain Paris), this protein is Crossover junction endodeoxyribonuclease RuvC.